Here is a 102-residue protein sequence, read N- to C-terminus: MPIAVGMIETRGFPAVVEAADAMVKAARVTLVGYEKIGSGRVTVIVRGDVSEVQASVAAGVDSAKRVNGGEVLSTHIIARPHENLEYVLPIRYTEAVEQFRN.

In terms of domain architecture, BMC spans 4-90 (AVGMIETRGF…PHENLEYVLP (87 aa)).

The protein belongs to the bacterial microcompartments protein family. CcmK subfamily. Homohexamer. Stacked hexamers, with the concave faces together, have also been crystallized. Interacts preferentially with itself, then with CcmK1 and CcmK4a in vitro. May interact with CcmL, this occurs at very high CcmK2 concentrations. Interacts with CcmN and CcmO in the carboxysome.

Its subcellular location is the carboxysome. Functionally, probably the major shell protein of the carboxysome, a polyhedral inclusion where RuBisCO (ribulose bisphosphate carboxylase, rbcL-rbcS) is sequestered. Assembles into hexamers which make sheets that form the facets of the polyhedral carboxysome. The hexamer central pore probably regulates metabolite flux. The sequence is that of Carboxysome shell protein CcmK2 from Thermosynechococcus vestitus (strain NIES-2133 / IAM M-273 / BP-1).